Reading from the N-terminus, the 122-residue chain is Ribosome-binding factor A (122 aa).

Belongs to the RbfA family. In terms of assembly, monomer. Binds 30S ribosomal subunits, but not 50S ribosomal subunits or 70S ribosomes.

The protein resides in the cytoplasm. Its function is as follows. One of several proteins that assist in the late maturation steps of the functional core of the 30S ribosomal subunit. Associates with free 30S ribosomal subunits (but not with 30S subunits that are part of 70S ribosomes or polysomes). Required for efficient processing of 16S rRNA. May interact with the 5'-terminal helix region of 16S rRNA. The polypeptide is Ribosome-binding factor A (Geotalea uraniireducens (strain Rf4) (Geobacter uraniireducens)).